The chain runs to 152 residues: S-protein homolog 4 (152 aa).

The signal sequence occupies residues 1–23 (MTTMLKTQVHVVVIYLLIQIAFS). A glycan (N-linked (GlcNAc...) asparagine) is linked at Asn71.

The protein belongs to the plant self-incompatibility (S1) protein family.

The protein localises to the secreted. The polypeptide is S-protein homolog 4 (Arabidopsis thaliana (Mouse-ear cress)).